The sequence spans 949 residues: Sensor histidine kinase RcsC (949 aa).

Residues 1–19 (MKYLASFRTTLKASRYMFR) are Cytoplasmic-facing. Residues 20–41 (ALALVLWLLIAFSSVFYIVNAL) traverse the membrane as a helical segment. Residues 42–313 (HQRESEIRQE…PVDKVLERIR (272 aa)) are Periplasmic-facing. Residues 314–335 (MVILNAILLNVLAGAALFTLAR) traverse the membrane as a helical segment. The Cytoplasmic portion of the chain corresponds to 336–949 (MYERRIFIPA…AERVRKSRES (614 aa)). A PAS domain is found at 357–425 (QFNRKIVASA…VLTSNNTNLQ (69 aa)). Residues 476–692 (TVSHELRTPL…QFTVRIPLYG (217 aa)) form the Histidine kinase domain. At H479 the chain carries Phosphohistidine; by autocatalysis. An ABL domain is found at 705 to 805 (SGKRCWLAVR…ARIYLIEMES (101 aa)). The Response regulatory domain maps to 826-940 (MILVVDDHPI…VIKQTLTVYA (115 aa)). 4-aspartylphosphate is present on D875.

The protein belongs to the RcsC family. In terms of assembly, interacts with RcsD. Post-translationally, autophosphorylated. Activation probably requires a transfer of a phosphate group from a His in the transmitter domain to an Asp in the receiver domain.

It localises to the cell inner membrane. The catalysed reaction is ATP + protein L-histidine = ADP + protein N-phospho-L-histidine.. Its function is as follows. Component of the Rcs signaling system, which controls transcription of numerous genes. RcsC functions as a membrane-associated protein kinase that phosphorylates RcsD in response to environmental signals. The phosphoryl group is then transferred to the response regulator RcsB. Involved in regulation of K30 capsular polysaccharide synthesis. The polypeptide is Sensor histidine kinase RcsC (Escherichia coli).